The chain runs to 383 residues: Interleukin-13 receptor subunit alpha-2 (383 aa).

The N-terminal stretch at 1–21 (MAFVHIRCLCFILLCTITGYS) is a signal peptide. Over 22-334 (LEIKVNPPQD…WEGYTGPDSK (313 aa)) the chain is Extracellular. Fibronectin type-III domains lie at 28 to 128 (PPQD…SDEG), 131 to 219 (ETKI…PIRS), and 234 to 332 (PPEF…TGPD). An intrachain disulfide couples Cys59 to Cys107. An N-linked (GlcNAc...) asparagine glycan is attached at Asn109. Cys139 and Cys149 are joined by a disulfide. Residue Asn162 is glycosylated (N-linked (GlcNAc...) asparagine). A disulfide bridge connects residues Cys178 and Cys191. N-linked (GlcNAc...) asparagine glycosylation is found at Asn209 and Asn293. An intrachain disulfide couples Cys263 to Cys310. The WSXWS motif motif lies at 316 to 320 (WSEWS). A helical membrane pass occupies residues 335 to 355 (IIFIVPVCLFFIFLLLLLCLI). Residues 356–383 (VEKEEPEPTLSLHVDLNKEVCAYEDTLC) are Cytoplasmic-facing.

Belongs to the type I cytokine receptor family. Type 5 subfamily. Interacts with IL4RA. Interacts with high affinity to interleukin-13 (IL13), but not to interleukin-4 (IL4). Post-translationally, cleaved by MMP8 leading to a soluble form that is also able to interact with IL13.

The protein localises to the cell membrane. It is found in the secreted. Its function is as follows. Cell surface receptor that plays a role in the regulation of IL-13-mediated responses. Functions as a decoy receptor that inhibits IL-13- and IL-4-mediated signal transduction via the JAK-STAT pathway and thereby modulates immune responses and inflammation. Serves as a functional signaling receptor for IL-13 in an alternative pathway involving AP-1 ultimately leading to the production of TGFB1. The chain is Interleukin-13 receptor subunit alpha-2 (Il13ra2) from Mus musculus (Mouse).